An 899-amino-acid chain; its full sequence is Probable dipeptidyl-aminopeptidase B (899 aa).

The interval 1–69 (MKLDRMRVGS…NHNGRTQGNY (69 aa)) is disordered. At 1-99 (MKLDRMRVGS…NGKSSQRRTL (99 aa)) the chain is on the cytoplasmic side. Positions 32 to 43 (DSSSTASISLTL) are enriched in low complexity. Residues 100–120 (IVFWLLVALCVGGWAVAFLFF) traverse the membrane as a helical; Signal-anchor for type II membrane protein segment. The Vacuolar segment spans residues 121-899 (VTSPGNKTST…KYFNLSFLGH (779 aa)). The segment covering 128–139 (TSTSPHSGSNSP) has biased composition (polar residues). The interval 128–149 (TSTSPHSGSNSPEGDVTKPGIP) is disordered. Asn212, Asn308, and Asn360 each carry an N-linked (GlcNAc...) asparagine glycan. The active-site Charge relay system is the Ser765. N-linked (GlcNAc...) asparagine glycans are attached at residues Asn819, Asn824, and Asn827. Residues Asp842 and His875 each act as charge relay system in the active site. Asn893 carries N-linked (GlcNAc...) asparagine glycosylation.

Belongs to the peptidase S9B family.

Its subcellular location is the vacuole membrane. The catalysed reaction is Release of an N-terminal dipeptide, Xaa-Yaa-|-Zaa-, from a polypeptide, preferentially when Yaa is Pro, provided Zaa is neither Pro nor hydroxyproline.. Its function is as follows. Type IV dipeptidyl-peptidase which removes N-terminal dipeptides sequentially from polypeptides having unsubstituted N-termini provided that the penultimate residue is proline. The sequence is that of Probable dipeptidyl-aminopeptidase B (DAPB) from Trichophyton verrucosum (strain HKI 0517).